Reading from the N-terminus, the 305-residue chain is tRNA-cytidine(32) 2-sulfurtransferase (305 aa).

A disordered region spans residues 1-20; that stretch reads MTAVLPLPQPLADPAPRDPR. Positions 59-64 match the PP-loop motif motif; that stretch reads SGGKDS. Cys-134, Cys-137, and Cys-225 together coordinate [4Fe-4S] cluster. A disordered region spans residues 282–305; the sequence is DAPSGLDPDPRAWLSAGHATHDSD.

Belongs to the TtcA family. As to quaternary structure, homodimer. Mg(2+) is required as a cofactor. It depends on [4Fe-4S] cluster as a cofactor.

It is found in the cytoplasm. The enzyme catalyses cytidine(32) in tRNA + S-sulfanyl-L-cysteinyl-[cysteine desulfurase] + AH2 + ATP = 2-thiocytidine(32) in tRNA + L-cysteinyl-[cysteine desulfurase] + A + AMP + diphosphate + H(+). Its pathway is tRNA modification. Its function is as follows. Catalyzes the ATP-dependent 2-thiolation of cytidine in position 32 of tRNA, to form 2-thiocytidine (s(2)C32). The sulfur atoms are provided by the cysteine/cysteine desulfurase (IscS) system. In Xanthomonas axonopodis pv. citri (strain 306), this protein is tRNA-cytidine(32) 2-sulfurtransferase.